The primary structure comprises 158 residues: Adenosine 5'-monophosphoramidase HNT1 (158 aa).

The 104-residue stretch at 26–129 folds into the HIT domain; the sequence is IFCKIIKSEI…IPKRDEKSGL (104 aa). AMP contacts are provided by residues 51–52, asparagine 103, 109–111, and 116–118; these read DI, HQE, and HFH. A Histidine triad motif motif is present at residues 114-118; it reads HVHFH. Histidine 116 acts as the Tele-AMP-histidine intermediate in catalysis.

It belongs to the HINT family. As to quaternary structure, homodimer. Interacts with KIN28. The cofactor is Mg(2+).

The enzyme catalyses adenosine 5'-phosphoramidate + H2O = AMP + NH4(+). In terms of biological role, hydrolyzes adenosine 5'-monophosphoramidate substrates such as AMP-morpholidate, AMP-N-alanine methyl ester, AMP-alpha-acetyl lysine methyl ester and AMP-NH2. Plays a role in the regulation of kinase KIN28 function. Essential for growth on galactose media at elevated temperatures. The polypeptide is Adenosine 5'-monophosphoramidase HNT1 (Saccharomyces cerevisiae (strain ATCC 204508 / S288c) (Baker's yeast)).